The chain runs to 137 residues: Structural protein A137R (137 aa).

The protein belongs to the asfivirus A137R family. As to quaternary structure, interacts with host TBK1.

It is found in the virion. The protein resides in the host cytoplasm. In terms of biological role, plays a role in the inhibition of the host innate immune response. Mechanistically, promotes the autophagy-mediated lysosomal degradation of host TBK1 and affects IRF3 nuclear translocation to block type I IFN production. The protein is Structural protein A137R of Ornithodoros (relapsing fever ticks).